We begin with the raw amino-acid sequence, 474 residues long: Ribulose bisphosphate carboxylase/oxygenase activase, chloroplastic (474 aa).

A chloroplast-targeting transit peptide spans 1 to 58; that stretch reads MAAAVSTVGAINRAPLSLNGSGSGAVSAPASTFLGKKVVTVSRFAQSNKKSNGSFKVL. Thr-78 is modified (phosphothreonine; by CK2). 165–172 provides a ligand contact to ATP; it reads GGKGQGKS. A Phosphothreonine modification is found at Thr-283.

This sequence belongs to the RuBisCO activase family. In terms of processing, phosphorylated at Thr-78 by CK2.

Its subcellular location is the plastid. The protein localises to the chloroplast stroma. The protein resides in the chloroplast. It is found in the plastoglobule. Its function is as follows. Activation of RuBisCO (ribulose-1,5-bisphosphate carboxylase/oxygenase; EC 4.1.1.39) involves the ATP-dependent carboxylation of the epsilon-amino group of lysine leading to a carbamate structure. In Arabidopsis thaliana (Mouse-ear cress), this protein is Ribulose bisphosphate carboxylase/oxygenase activase, chloroplastic (RCA).